The chain runs to 509 residues: Probable basic-leucine zipper transcription factor H (509 aa).

The tract at residues 1–42 (MMNSPRSLDSSDGSVDSSSVYSGTSSFGSSFTSSTGSGFTNS) is disordered. Low complexity predominate over residues 10–39 (SSDGSVDSSSVYSGTSSFGSSFTSSTGSGF). The bZIP domain occupies 50-113 (AKKKKIRQMQ…NENYLKINQL (64 aa)). Residues 51–77 (KKKKIRQMQNRQSAAQYRERKKEYLEK) are basic motif. The tract at residues 78-99 (LETIVDNLESDRNQLLQQTKQL) is leucine-zipper. Disordered regions lie at residues 134–185 (LLSK…SNNG), 223–275 (FSHL…SRFN), 290–414 (IENV…IINN), and 465–509 (SNNN…GIPK). Low complexity-rich tracts occupy residues 226-248 (LQQQ…SPIP), 255-269 (PIQQ…QNIN), 292-350 (NVNN…SNRS), 361-414 (QQQQ…IINN), 465-483 (SNNN…NSPS), and 490-509 (NGGI…GIPK).

Belongs to the bZIP family.

It is found in the nucleus. Probable transcriptional regulator. The polypeptide is Probable basic-leucine zipper transcription factor H (bzpH) (Dictyostelium discoideum (Social amoeba)).